We begin with the raw amino-acid sequence, 459 residues long: Plasma alpha-L-fucosidase (459 aa).

An N-terminal signal peptide occupies residues 1 to 23 (MRLGLLMFLPLLLLATRYRAVTA). N-linked (GlcNAc...) asparagine glycans are attached at residues asparagine 163 and asparagine 231. Serine 293 carries the post-translational modification Phosphoserine. Asparagine 369 is a glycosylation site (N-linked (GlcNAc...) asparagine).

It belongs to the glycosyl hydrolase 29 family. As to quaternary structure, homotetramer.

It is found in the secreted. It carries out the reaction an alpha-L-fucoside + H2O = L-fucose + an alcohol. In terms of biological role, alpha-L-fucosidase is responsible for hydrolyzing the alpha-1,6-linked fucose joined to the reducing-end N-acetylglucosamine of the carbohydrate moieties of glycoproteins. This Rattus norvegicus (Rat) protein is Plasma alpha-L-fucosidase (Fuca2).